Here is a 379-residue protein sequence, read N- to C-terminus: MKRNSINIHHVTSFSSSPFWCVFFLVLLCKTSTNALVKQPPNETTPAIIVFGDSIVDAGNNDDIMTTLARCNYPPYGIDFDGGIPTGRFCNGKVATDFIAGKFGIKPSIPAYRNPNLKPEDLLTGVTFASGGAGYVPFTTQLSTYLFIYKPLLFLKGGIALSQQLKLFEEYVEKMKKMVGEERTKLIIKNSLFMVICGSNDITNTYFGLPSVQQQYDVASFTTLMADNARSFAQKLHEYGARRIQVFGAPPVGCVPSQRTLAGGPTRNCVVRFNDATKLYNVKLAANLGSLSRTLGDKTIIYVDIYDSLLDIILDPRQYGFKVVDKGCCGTGLIEVALLCNNFAADVCPNRDEYVFWDSFHPTEKTYRIMATKYFERYV.

An N-terminal signal peptide occupies residues 1 to 35 (MKRNSINIHHVTSFSSSPFWCVFFLVLLCKTSTNA). Asparagine 42 carries N-linked (GlcNAc...) asparagine glycosylation. Serine 54 serves as the catalytic Nucleophile. Residues aspartate 358 and histidine 361 contribute to the active site.

This sequence belongs to the 'GDSL' lipolytic enzyme family.

The protein resides in the secreted. This Arabidopsis thaliana (Mouse-ear cress) protein is GDSL esterase/lipase EXL2 (EXL2).